A 396-amino-acid chain; its full sequence is MTREVVLVGACRTPVGTFGGTLKDVGSAQLGAIVMGEAIKRAGIKAEQIDEVIFGCVLQAGLGQNVARQCMINAGIPKEVTAFTINKVCGSGLRAVSLAAQVIKAGDADIIMAGGTENMDKAPFILPNARWGYRMSMPKGDLIDEMVWGGLTDVFNGYHMGITAENINDMYGITREEQDAFGFRSQTLAAQAIESGRFKDEIVPVVIKGKKGDIVFDTDEHPRKSTPEAMAKLAPAFKKGGSVTAGNASGINDAAAAVIVMSKEKADELGIKPMAKVVSYASGGVDPSVMGLGPIPASRKALEKAGLTIDDIDLIEANEAFAAQSIAVARDLGWADKMEKVNVNGGAIAIGHPIGSSGARILVTLLYEMQKRGSKKGLATLCIGGGMGTALIVEAL.

The active-site Acyl-thioester intermediate is Cys89. CoA contacts are provided by residues 223–225 (RKS) and Ser249. Residues His352 and Cys382 each act as proton acceptor in the active site.

It belongs to the thiolase-like superfamily. Thiolase family.

It is found in the cytoplasm. It catalyses the reaction 2 acetyl-CoA = acetoacetyl-CoA + CoA. It participates in lipid metabolism; butanoate metabolism. In terms of biological role, involved in syntrophic growth of S.wolfei with butyrate, as part of the butyrate oxidation pathway. Probably catalyzes the beta-keto thiolysis of acetoacetyl-CoA, leading to 2 acetyl-CoA molecules. This is Acetyl-CoA acetyltransferase from Syntrophomonas wolfei subsp. wolfei (strain DSM 2245B / Goettingen).